The primary structure comprises 517 residues: NEDD8-activating enzyme E1 regulatory subunit (517 aa).

This sequence belongs to the ubiquitin-activating E1 family. ULA1 subfamily. In terms of assembly, heterodimer of uba3 and ula1. The complex binds NEDD8/ubl1 and ubc12.

The protein resides in the cytoplasm. It is found in the nucleus. It functions in the pathway protein modification; protein neddylation. In terms of biological role, regulatory subunit of the dimeric uba3-ula1 E1 enzyme. E1 activates NEDD8/ubl1 by first adenylating its C-terminal glycine residue with ATP, thereafter linking this residue to the side chain of the catalytic cysteine, yielding a NEDD8-UBA3 thioester and free AMP. E1 finally transfers NEDD8 to the catalytic cysteine of ubc12. This chain is NEDD8-activating enzyme E1 regulatory subunit (uba5), found in Schizosaccharomyces pombe (strain 972 / ATCC 24843) (Fission yeast).